We begin with the raw amino-acid sequence, 963 residues long: Phosphofurin acidic cluster sorting protein 1 (963 aa).

Residues 1-22 (MAERGGAGGGPGGAGGGSGQRG) show a composition bias toward gly residues. 2 disordered regions span residues 1–72 (MAER…SSST) and 78–97 (VAVASGSAPPGGPGPGRTPA). An N-acetylalanine modification is found at Ala-2. Position 28 is a phosphoserine (Ser-28). Thr-46 is modified (phosphothreonine). Positions 53-72 (ATSSSSSTSAAAASSSSSST) are enriched in low complexity. Residues 168-175 (ETELQLTF) are involved in binding to AP-1. Tyr-251 is subject to Phosphotyrosine. Residues 262-273 (GIKSKLSDRSPD) are compositionally biased toward basic and acidic residues. Disordered stretches follow at residues 262–299 (GIKSKLSDRSPDIDNYSEEEEESFSSEQEGSDDPLHGQ) and 377–428 (NPSD…GKDT). Over residues 276-293 (NYSEEEEESFSSEQEGSD) the composition is skewed to acidic residues. Positions 353–377 (HVSREQIREVEEDLDELYDSLEMYN) form a coiled coil. Phosphoserine is present on residues Ser-379 and Ser-381. Positions 406-428 (MSQSSSQTEIGSLNSKGSLGKDT) are enriched in polar residues. Phosphoserine occurs at positions 430 and 495. Disordered stretches follow at residues 476-542 (PEKV…HSTQ) and 760-804 (SPST…SMSS). Positions 483-496 (MKSSKTDLQGSASP) are enriched in polar residues. Thr-504 is modified (phosphothreonine). Phosphoserine occurs at positions 519, 528, 529, 531, and 534. Residues 770-804 (SPVVSLTVPSTSPPSSSGLSRDATATPPSSPSMSS) are compositionally biased toward low complexity.

It belongs to the PACS family. In terms of assembly, associates with AP-1 and AP-3 but not with AP-2 complexes. Interacts with FURIN. Forms a ternary complex with FURIN and AP-1. Interacts with NPHP1; the interaction is dependent of NPHP1 phosphorylation by CK2. Interacts with PKD2 (via acidic region). Interacts with SORL1. Interacts with WDR37. As to quaternary structure, (Microbial infection) Interacts with HIV-1 Nef. (Microbial infection) Interacts with Epstein-barr virus protein BBLF1.

The protein localises to the golgi apparatus. It is found in the trans-Golgi network. Its function is as follows. Coat protein that is involved in the localization of trans-Golgi network (TGN) membrane proteins that contain acidic cluster sorting motifs. Controls the endosome-to-Golgi trafficking of furin and mannose-6-phosphate receptor by connecting the acidic-cluster-containing cytoplasmic domain of these molecules with the adapter-protein complex-1 (AP-1) of endosomal clathrin-coated membrane pits. Involved in HIV-1 nef-mediated removal of MHC-I from the cell surface to the TGN. Required for normal ER Ca2+ handling in lymphocytes. Together with WDR37, it plays an essential role in lymphocyte development, quiescence and survival. Required for stabilizing peripheral lymphocyte populations. The chain is Phosphofurin acidic cluster sorting protein 1 (PACS1) from Homo sapiens (Human).